A 530-amino-acid chain; its full sequence is Bifunctional purine biosynthesis protein PurH (530 aa).

One can recognise an MGS-like domain in the interval 1-148; that stretch reads MENSRPIKRA…KNHKDVGIVV (148 aa).

It belongs to the PurH family.

The enzyme catalyses (6R)-10-formyltetrahydrofolate + 5-amino-1-(5-phospho-beta-D-ribosyl)imidazole-4-carboxamide = 5-formamido-1-(5-phospho-D-ribosyl)imidazole-4-carboxamide + (6S)-5,6,7,8-tetrahydrofolate. It catalyses the reaction IMP + H2O = 5-formamido-1-(5-phospho-D-ribosyl)imidazole-4-carboxamide. Its pathway is purine metabolism; IMP biosynthesis via de novo pathway; 5-formamido-1-(5-phospho-D-ribosyl)imidazole-4-carboxamide from 5-amino-1-(5-phospho-D-ribosyl)imidazole-4-carboxamide (10-formyl THF route): step 1/1. The protein operates within purine metabolism; IMP biosynthesis via de novo pathway; IMP from 5-formamido-1-(5-phospho-D-ribosyl)imidazole-4-carboxamide: step 1/1. The polypeptide is Bifunctional purine biosynthesis protein PurH (Psychromonas ingrahamii (strain DSM 17664 / CCUG 51855 / 37)).